The chain runs to 365 residues: Peptide chain release factor 1 (365 aa).

Glutamine 240 is modified (N5-methylglutamine).

The protein belongs to the prokaryotic/mitochondrial release factor family. Post-translationally, methylated by PrmC. Methylation increases the termination efficiency of RF1.

It localises to the cytoplasm. Peptide chain release factor 1 directs the termination of translation in response to the peptide chain termination codons UAG and UAA. In Bifidobacterium animalis subsp. lactis (strain AD011), this protein is Peptide chain release factor 1.